Here is a 375-residue protein sequence, read N- to C-terminus: Methylthioribose-1-phosphate isomerase (375 aa).

The Proton donor role is filled by aspartate 259.

It belongs to the eIF-2B alpha/beta/delta subunits family. MtnA subfamily.

It localises to the cytoplasm. The protein localises to the nucleus. It catalyses the reaction 5-(methylsulfanyl)-alpha-D-ribose 1-phosphate = 5-(methylsulfanyl)-D-ribulose 1-phosphate. It participates in amino-acid biosynthesis; L-methionine biosynthesis via salvage pathway; L-methionine from S-methyl-5-thio-alpha-D-ribose 1-phosphate: step 1/6. Functionally, catalyzes the interconversion of methylthioribose-1-phosphate (MTR-1-P) into methylthioribulose-1-phosphate (MTRu-1-P). In Populus trichocarpa (Western balsam poplar), this protein is Methylthioribose-1-phosphate isomerase.